A 529-amino-acid polypeptide reads, in one-letter code: Beta-hexosaminidase subunit alpha (529 aa).

Residues M1 to A22 form the signal peptide. Residues L23–H88 constitute a propeptide that is removed on maturation. C58 and C104 are joined by a disulfide. N115, N157, and N295 each carry an N-linked (GlcNAc...) asparagine glycan. Cysteines 277 and 328 form a disulfide. The active-site Proton donor is the E323. Positions N423–R424 are critical for hydrolysis GM2 gangliosides. The cysteines at positions 505 and 522 are disulfide-linked.

Belongs to the glycosyl hydrolase 20 family. In terms of assembly, there are 3 beta-hexosaminidase isozymes: isozyme A (hexosaminidase A) is a heterodimer composed of one subunit alpha and one subunit beta (chain A and B); isozyme B (hexosaminidase B) is a homodimer of two beta subunits (two chains A and B); isozyme S (hexosaminidase S) is a homodimer of two alpha subunits. The composition of the dimer (isozyme A versus isozyme S) has a significant effect on the substrate specificity of the alpha subunit active site. In terms of processing, N-linked glycan at Asn-115 consists of Man(3)-GlcNAc(2). N-linked glycan at Asn-157 consists of either GlcNAc or GlcNAc(2)-Man(7-9). N-linked glycan at Asn-295 consists of either GlcNAc, GlcNAc-Fuc, or GlcNAc(2)-Man(4).

It localises to the lysosome. The catalysed reaction is Hydrolysis of terminal non-reducing N-acetyl-D-hexosamine residues in N-acetyl-beta-D-hexosaminides.. The enzyme catalyses N-acetyl-beta-D-galactosaminyl-(1-&gt;4)-beta-D-3-sulfogalactosyl-(1-&gt;4)-beta-D-glucosyl-(1&lt;-&gt;1')-ceramide + H2O = a beta-D-3-sulfogalactosyl-(1-&gt;4)-beta-D-glucosyl-(1&lt;-&gt;1')-ceramide + N-acetyl-beta-D-galactosamine. It catalyses the reaction a ganglioside GM2 (d18:1(4E)) + H2O = a ganglioside GM3 (d18:1(4E)) + N-acetyl-beta-D-galactosamine. It carries out the reaction a ganglioside GM2 + H2O = a ganglioside GM3 + N-acetyl-beta-D-galactosamine. The catalysed reaction is beta-D-GalNAc-(1-&gt;4)-alpha-L-IdoA-(1-&gt;3)-beta-D-GalNAc-4-sulfate-(1-&gt;4)-alpha-L-IdoA-(1-&gt;3)-D-GalNAc-4-sulfate + H2O = alpha-L-IdoA-(1-&gt;3)-beta-D-GalNAc-4-sulfate-(1-&gt;4)-alpha-L-IdoA-(1-&gt;3)-D-GalNAc-4-sulfate + N-acetyl-D-galactosamine. The enzyme catalyses N-acetyl-beta-D-6-sulfogalactosaminyl-(1-&gt;4)-alpha-L-iduronyl-(1-&gt;3)-N-acetyl-D-6-sulfogalactosamine + H2O = alpha-L-iduronyl-(1-&gt;3)-N-acetyl-D-6-sulfogalactosamine + N-acetyl-D-6-sulfogalactosamine. Its activity is regulated as follows. Addition of GM2A stimulates the hydrolysis of sulfated glycosphingolipid SM2 and the ganglioside GM2. Functionally, hydrolyzes the non-reducing end N-acetyl-D-hexosamine and/or sulfated N-acetyl-D-hexosamine of glycoconjugates, such as the oligosaccharide moieties from proteins and neutral glycolipids, or from certain mucopolysaccharides. The isozyme S is as active as the isozyme A on the anionic bis-sulfated glycans, the chondroitin-6-sulfate trisaccharide (C6S-3), and the dermatan sulfate pentasaccharide, and the sulfated glycosphingolipid SM2. The isozyme B does not hydrolyze each of these substrates, however hydrolyzes efficiently neutral oligosaccharide. Only the isozyme A is responsible for the degradation of GM2 gangliosides in the presence of GM2A. This is Beta-hexosaminidase subunit alpha from Homo sapiens (Human).